A 430-amino-acid chain; its full sequence is Enolase (430 aa).

Residue Gln-163 participates in (2R)-2-phosphoglycerate binding. Residue Glu-205 is the Proton donor of the active site. 3 residues coordinate Mg(2+): Asp-242, Glu-287, and Asp-314. 4 residues coordinate (2R)-2-phosphoglycerate: Lys-339, Arg-368, Ser-369, and Lys-390. The Proton acceptor role is filled by Lys-339.

The protein belongs to the enolase family. Requires Mg(2+) as cofactor.

The protein localises to the cytoplasm. It is found in the secreted. Its subcellular location is the cell surface. It carries out the reaction (2R)-2-phosphoglycerate = phosphoenolpyruvate + H2O. It participates in carbohydrate degradation; glycolysis; pyruvate from D-glyceraldehyde 3-phosphate: step 4/5. Catalyzes the reversible conversion of 2-phosphoglycerate (2-PG) into phosphoenolpyruvate (PEP). It is essential for the degradation of carbohydrates via glycolysis. The sequence is that of Enolase from Listeria innocua serovar 6a (strain ATCC BAA-680 / CLIP 11262).